The chain runs to 191 residues: UPF0669 protein C6orf120 (191 aa).

The N-terminal stretch at 1–30 (MAAPRGRAAPWTTALLLLLASQVLSPGSCA) is a signal peptide. The N-linked (GlcNAc...) asparagine glycan is linked to N53.

The protein belongs to the UPF0669 family. In terms of tissue distribution, mainly expressed in hepatocytes and some weak expression in germinal center cells of lymph nodes.

It is found in the secreted. May be involved in induction of apoptosis in CD4(+) T-cells, but not CD8(+) T-cells or hepatocytes. This chain is UPF0669 protein C6orf120 (C6orf120), found in Homo sapiens (Human).